The following is a 404-amino-acid chain: Multidrug resistance protein MdtG (404 aa).

11 consecutive transmembrane segments (helical) span residues 19–39 (LGCF…PLYV), 56–76 (LVFS…GGLA), 90–110 (LGMA…QFLI), 113–133 (ALLG…ATQV), 144–164 (TLST…GLLA), 171–191 (PVFF…FFFI), 222–242 (LFVT…ILTL), 254–274 (IAFI…LSAP), 288–308 (ILIV…FVQT), 317–337 (FLLG…LVYN), and 376–396 (AVFC…WNSL).

This sequence belongs to the major facilitator superfamily. DHA1 family. MdtG (TC 2.A.1.2.20) subfamily.

It is found in the cell inner membrane. This is Multidrug resistance protein MdtG from Salmonella typhi.